The following is a 706-amino-acid chain: MMGSSSQELQTALTDVSKTCHHLWEENKDLQGRFVNELGELQRLQMVIAQLEQQQRLENVFTVKQQMTELQKRAATLYEHLTQKRNDIVIKLNDGTNFATMLQTQLIGEKLFSWKNAQKLAQIGMPFDNREQLLDEIQIEFEFLADQNWQLNMFSCWMLDLLRRAPQLNDGLAQATIGKLTAITEQLNKLLFMLVSQSFIVSVQPEPVLKTQHKFVTEVRLLIGDKLGIRQHLVNTNVSVKIIAEDEAKQLSVDYDAHKEIRNNKTVGTISNDFEKLTMNERGHLAAKFNNSKLTRIAHRKPPPKGASDLKCAASMQAATDQKYALLFFITPFQMGNLSKEEQFDVWTLSLPIMVTVHGSQDCDAQVAILWHRAFASISRNPNTTDVTAVTWDNLAIMLRNKFSLFTGARRPLSDSDLAYLSEKMLMPNVADQKPITFHRFAKQAMRDDLPFSFWEWFFSIMQLIKQKLLKFWDEGWCIGFISKNDASQSMMMCQHSSFLLRFSDSQTGAVSIGFVCEEADGQKIPFHLAPFTIKDLDQLSLASRIASCPQLKDIRYMYPAIDKEEMLRFFESEERHRVGGGDSPTGYIQSEIVMVAKTNGNFRRMSNAPSMFGADSPSPLSVQSKLDWSPGEVHQNHMMEMSDELGQILTVSDMSGDVETLLGPAFKNNITNYNPHDGNHQHNLHFVDMSQQGMMQQHHNQFYPS.

The SH2 domain occupies 477 to 574 (WCIGFISKND…EEMLRFFESE (98 aa)).

It belongs to the transcription factor STAT family. In terms of assembly, forms a homodimer or a heterodimer with a related family member. In terms of tissue distribution, expressed in adult and larval pharynx, head ganglia, tail ganglia, ventral nerve cord and body muscles.

The protein localises to the cytoplasm. Its subcellular location is the nucleus. Carries out a dual function: signal transduction and activation of transcription. Activated STAT proteins play a role in repression of dauer formation. Neuronal expression is held in check by negative signals through the TGF-beta pathway that target the daf-3 transcription factor. In Caenorhabditis elegans, this protein is Signal transducer and activator of transcription 1.